A 1635-amino-acid chain; its full sequence is U3 small nucleolar RNA-associated protein 10 (1635 aa).

The segment at 781–803 (TTSMDAPSDESTKRRRRSSSSTV) is disordered. The next 2 helical transmembrane spans lie at 1141 to 1161 (PELLNVILSLLPLPLFVTVAG) and 1288 to 1308 (IALSVLALFATFIKRLPSFMV).

The protein belongs to the HEATR1/UTP10 family. Component of the ribosomal small subunit (SSU) processome.

It is found in the nucleus. The protein resides in the nucleolus. The protein localises to the membrane. Involved in nucleolar processing of pre-18S ribosomal RNA. Involved in ribosome biosynthesis. The polypeptide is U3 small nucleolar RNA-associated protein 10 (Yarrowia lipolytica (strain CLIB 122 / E 150) (Yeast)).